Reading from the N-terminus, the 683-residue chain is DNA ligase (683 aa).

NAD(+) contacts are provided by residues 36–40 (DAEYD), 85–86 (SL), and glutamate 119. Residue lysine 121 is the N6-AMP-lysine intermediate of the active site. Arginine 142, glutamate 179, lysine 295, and lysine 319 together coordinate NAD(+). Residues cysteine 413, cysteine 416, cysteine 431, and cysteine 437 each contribute to the Zn(2+) site. The BRCT domain maps to 596-683 (TETLPLSGQT…EHQAHLGGEA (88 aa)).

The protein belongs to the NAD-dependent DNA ligase family. LigA subfamily. Mg(2+) serves as cofactor. Requires Mn(2+) as cofactor.

The catalysed reaction is NAD(+) + (deoxyribonucleotide)n-3'-hydroxyl + 5'-phospho-(deoxyribonucleotide)m = (deoxyribonucleotide)n+m + AMP + beta-nicotinamide D-nucleotide.. DNA ligase that catalyzes the formation of phosphodiester linkages between 5'-phosphoryl and 3'-hydroxyl groups in double-stranded DNA using NAD as a coenzyme and as the energy source for the reaction. It is essential for DNA replication and repair of damaged DNA. The protein is DNA ligase of Hahella chejuensis (strain KCTC 2396).